The following is a 245-amino-acid chain: Acetylglutamate kinase (245 aa).

Substrate-binding positions include 41-42 (GG), R63, and N156.

The protein belongs to the acetylglutamate kinase family. ArgB subfamily.

The protein resides in the cytoplasm. It carries out the reaction N-acetyl-L-glutamate + ATP = N-acetyl-L-glutamyl 5-phosphate + ADP. Its pathway is amino-acid biosynthesis; L-arginine biosynthesis; N(2)-acetyl-L-ornithine from L-glutamate: step 2/4. In terms of biological role, catalyzes the ATP-dependent phosphorylation of N-acetyl-L-glutamate. The protein is Acetylglutamate kinase of Leuconostoc citreum (strain KM20).